Reading from the N-terminus, the 344-residue chain is L-rhamnose-proton symporter (344 aa).

10 helical membrane-spanning segments follow: residues Ile-5–Pro-25, Trp-38–Leu-58, Ile-72–Leu-92, Met-101–Ile-121, Thr-137–Leu-157, Leu-175–Ala-195, Leu-214–Ile-234, Ile-259–Gly-279, Phe-289–Leu-309, and Val-323–Ala-343.

The protein belongs to the L-rhamnose transporter (TC 2.A.7.6) family.

It is found in the cell inner membrane. The enzyme catalyses L-rhamnopyranose(in) + H(+)(in) = L-rhamnopyranose(out) + H(+)(out). Its function is as follows. Uptake of L-rhamnose across the cytoplasmic membrane with the concomitant transport of protons into the cell (symport system). This chain is L-rhamnose-proton symporter, found in Mannheimia succiniciproducens (strain KCTC 0769BP / MBEL55E).